Consider the following 278-residue polypeptide: MNILNIYNEFDINNFDLSVDHYGSEKCDRGYSFGPTIRDNYVIHFILEGKGKLTINQHTLDLAAGDIFLLPKDISTFYQADLQMPWSYIWIGFSGSKAENILKQSSLFKRFYCHSGRSSKLFSQMMTIIQFANTPLTSVNELLMVGELYKLLAALIEEFPLSHLEESNSSTKAYVNQVKKIIHSQYGSSLRVNDIAKKLNLSRSYLYKIFRKSTNLSIKEYILQVRMKRSQYLLENPKLSIAEISNSVGFSDSLAFSKAFKNYFGKSPSKFRKEIQNN.

An HTH araC/xylS-type domain is found at 176–274 (NQVKKIIHSQ…GKSPSKFRKE (99 aa)). 2 DNA-binding regions (H-T-H motif) span residues 193–214 (NDIAKKLNLSRSYLYKIFRKST) and 241–264 (IAEISNSVGFSDSLAFSKAFKNYF).

In terms of biological role, regulatory protein for the msm operon for multiple sugar metabolism. Activates the transcription of the msmEFGK, aga, dexB and gftA genes. In Streptococcus mutans serotype c (strain ATCC 700610 / UA159), this protein is Msm operon regulatory protein (msmR).